An 89-amino-acid polypeptide reads, in one-letter code: Large ribosomal subunit protein bL27 (89 aa).

Residues 1–21 form a disordered region; that stretch reads MAHKKAGGSSRNGRDSKGKRL.

This sequence belongs to the bacterial ribosomal protein bL27 family.

In Bradyrhizobium sp. (strain ORS 278), this protein is Large ribosomal subunit protein bL27.